We begin with the raw amino-acid sequence, 249 residues long: Probable phosphatase VVA0289 (249 aa).

Residues His-8, His-10, His-16, His-41, Glu-74, His-102, His-132, Asp-194, and His-196 each contribute to the Zn(2+) site.

The protein belongs to the PHP family. It depends on Zn(2+) as a cofactor.

This chain is Probable phosphatase VVA0289, found in Vibrio vulnificus (strain YJ016).